A 29-amino-acid polypeptide reads, in one-letter code: Cytochrome b6-f complex subunit 8 (29 aa).

Residues 3–23 (ILSLGWAALMTMFTFSLALTV) form a helical membrane-spanning segment.

The protein belongs to the PetN family. In terms of assembly, the 4 large subunits of the cytochrome b6-f complex are cytochrome b6, subunit IV (17 kDa polypeptide, PetD), cytochrome f and the Rieske protein, while the 4 small subunits are PetG, PetL, PetM and PetN. The complex functions as a dimer.

It is found in the plastid. The protein resides in the chloroplast thylakoid membrane. Functionally, component of the cytochrome b6-f complex, which mediates electron transfer between photosystem II (PSII) and photosystem I (PSI), cyclic electron flow around PSI, and state transitions. The protein is Cytochrome b6-f complex subunit 8 of Phaeodactylum tricornutum (strain CCAP 1055/1).